Reading from the N-terminus, the 213-residue chain is FMN-dependent NADH:quinone oxidoreductase 3 (213 aa).

FMN is bound by residues Ser10, 16-18, and 96-99; these read SVS and MYNF.

The protein belongs to the azoreductase type 1 family. As to quaternary structure, homodimer. FMN is required as a cofactor.

It carries out the reaction 2 a quinone + NADH + H(+) = 2 a 1,4-benzosemiquinone + NAD(+). The catalysed reaction is N,N-dimethyl-1,4-phenylenediamine + anthranilate + 2 NAD(+) = 2-(4-dimethylaminophenyl)diazenylbenzoate + 2 NADH + 2 H(+). Quinone reductase that provides resistance to thiol-specific stress caused by electrophilic quinones. Shows a preference for naphthoquinones such as plumbagin. In terms of biological role, also exhibits azoreductase activity. Catalyzes the reductive cleavage of the azo bond in aromatic azo compounds to the corresponding amines. Preferred substrates are methyl red, amaranth and p-aminoazobenzene sulfonamide (PAABSA). This is FMN-dependent NADH:quinone oxidoreductase 3 from Pseudomonas aeruginosa (strain ATCC 15692 / DSM 22644 / CIP 104116 / JCM 14847 / LMG 12228 / 1C / PRS 101 / PAO1).